The following is a 249-amino-acid chain: Globin-like protein 9 (249 aa).

The disordered stretch occupies residues 20-43; the sequence is TNKGPNGLARRGTQRGCSRSKSTR. Positions 52–205 constitute a Globin domain; it reads SLTFSQKQAL…LIDELRGGFE (154 aa). Residues His-116 and His-148 each contribute to the heme site.

Belongs to the globin family.

In Caenorhabditis elegans, this protein is Globin-like protein 9 (glb-9).